Here is a 633-residue protein sequence, read N- to C-terminus: Extracellular metalloproteinase 3 (633 aa).

The signal sequence occupies residues 1–18 (MHGLLLAGLLALPMNVLA). Positions 19–246 (HPAEQHASNV…VHNVVDYVAS (228 aa)) are excised as a propeptide. An N-linked (GlcNAc...) asparagine glycan is attached at asparagine 410. Histidine 429 contributes to the Zn(2+) binding site. The active site involves glutamate 430. Histidine 433 is a Zn(2+) binding site. Asparagine 480 and asparagine 622 each carry an N-linked (GlcNAc...) asparagine glycan.

Belongs to the peptidase M36 family. Requires Zn(2+) as cofactor.

The protein resides in the secreted. Its function is as follows. Secreted metalloproteinase probably acting as a virulence factor. This Arthroderma benhamiae (Trichophyton mentagrophytes) protein is Extracellular metalloproteinase 3 (MEP3).